Here is a 61-residue protein sequence, read N- to C-terminus: Metallothionein-2 (61 aa).

M1 is subject to N-acetylmethionine. The interval M1–C29 is beta. A divalent metal cation-binding residues include C5, C7, C13, C15, C19, C21, C24, C26, C29, C33, C34, C36, C37, C41, C44, C48, C50, and C57. The alpha stretch occupies residues K30–A61. Position 58 is a phosphoserine (S58). A divalent metal cation is bound by residues C59 and C60.

It belongs to the metallothionein superfamily. Type 1 family.

In terms of biological role, metallothioneins have a high content of cysteine residues that bind various heavy metals; these proteins are transcriptionally regulated by both heavy metals and glucocorticoids. The sequence is that of Metallothionein-2 (Mt2) from Rattus norvegicus (Rat).